The following is a 183-amino-acid chain: Inner membrane protein p54 (183 aa).

A helical transmembrane segment spans residues 32–52 (YTILIAIVVLVIIIIVLIYLF). The interval 81-157 (EVTPQPGTSK…PYTTVTTQNT (77 aa)) is disordered. Polar residues predominate over residues 111–122 (RPATNKPVTDNP). A compositionally biased stretch (low complexity) spans 130 to 143 (ATGGPAAAPAAASA). Residues 149 to 161 (YTTVTTQNTASQT) form an interaction with host DYNLL1 region.

The protein belongs to the asfivirus envelope protein p54 family. In terms of assembly, interacts with the host light chain cytoplasmic dynein DYNLL1; this interaction is critical for intracellular microtubule-dependent virus transport toward viral factories.

The protein localises to the virion membrane. It localises to the host cytoplasm. Its subcellular location is the host cytoskeleton. It is found in the host endoplasmic reticulum membrane. Functionally, inner envelope protein involved, through its interaction with host dynein, in the intracellular microtubule-dependent transport of viral capsid toward viral factories. Seems to induce caspase-3 activation and apoptosis. Plays a role in virion morphogenesis by recruiting and transforming the host ER membranes into the precursors of the viral envelope. Involved in virus attachment to the host cell. The sequence is that of Inner membrane protein p54 from Ornithodoros (relapsing fever ticks).